A 201-amino-acid chain; its full sequence is ATP-dependent Clp protease proteolytic subunit (201 aa).

Ser-100 acts as the Nucleophile in catalysis. Residue His-125 is part of the active site.

It belongs to the peptidase S14 family. In terms of assembly, component of the chloroplastic Clp protease core complex.

It localises to the plastid. The protein localises to the chloroplast stroma. It carries out the reaction Hydrolysis of proteins to small peptides in the presence of ATP and magnesium. alpha-casein is the usual test substrate. In the absence of ATP, only oligopeptides shorter than five residues are hydrolyzed (such as succinyl-Leu-Tyr-|-NHMec, and Leu-Tyr-Leu-|-Tyr-Trp, in which cleavage of the -Tyr-|-Leu- and -Tyr-|-Trp bonds also occurs).. Its function is as follows. Cleaves peptides in various proteins in a process that requires ATP hydrolysis. Has a chymotrypsin-like activity. Plays a major role in the degradation of misfolded proteins. The sequence is that of ATP-dependent Clp protease proteolytic subunit from Ranunculus macranthus (Large buttercup).